A 204-amino-acid polypeptide reads, in one-letter code: Large ribosomal subunit protein eL15A (204 aa).

Positions 164–185 (LTATGKKSRGINKGHKFNNTKA) are disordered. Basic residues predominate over residues 169–185 (KKSRGINKGHKFNNTKA).

This sequence belongs to the eukaryotic ribosomal protein eL15 family. In terms of assembly, component of the large ribosomal subunit (LSU). Mature yeast ribosomes consist of a small (40S) and a large (60S) subunit. The 40S small subunit contains 1 molecule of ribosomal RNA (18S rRNA) and 33 different proteins (encoded by 57 genes). The large 60S subunit contains 3 rRNA molecules (25S, 5.8S and 5S rRNA) and 46 different proteins (encoded by 81 genes).

Its subcellular location is the cytoplasm. Component of the ribosome, a large ribonucleoprotein complex responsible for the synthesis of proteins in the cell. The small ribosomal subunit (SSU) binds messenger RNAs (mRNAs) and translates the encoded message by selecting cognate aminoacyl-transfer RNA (tRNA) molecules. The large subunit (LSU) contains the ribosomal catalytic site termed the peptidyl transferase center (PTC), which catalyzes the formation of peptide bonds, thereby polymerizing the amino acids delivered by tRNAs into a polypeptide chain. The nascent polypeptides leave the ribosome through a tunnel in the LSU and interact with protein factors that function in enzymatic processing, targeting, and the membrane insertion of nascent chains at the exit of the ribosomal tunnel. The polypeptide is Large ribosomal subunit protein eL15A (Saccharomyces cerevisiae (strain ATCC 204508 / S288c) (Baker's yeast)).